Reading from the N-terminus, the 212-residue chain is ATP-dependent dethiobiotin synthetase BioD (212 aa).

13–18 (GIGKTV) is an ATP binding site. A Mg(2+)-binding site is contributed by T17. Residue K33 is part of the active site. A substrate-binding site is contributed by S37. E100 provides a ligand contact to Mg(2+). ATP-binding positions include 100-103 (EGAG) and 184-186 (PRL).

The protein belongs to the dethiobiotin synthetase family. In terms of assembly, homodimer. The cofactor is Mg(2+).

It localises to the cytoplasm. The enzyme catalyses (7R,8S)-7,8-diammoniononanoate + CO2 + ATP = (4R,5S)-dethiobiotin + ADP + phosphate + 3 H(+). The protein operates within cofactor biosynthesis; biotin biosynthesis; biotin from 7,8-diaminononanoate: step 1/2. Functionally, catalyzes a mechanistically unusual reaction, the ATP-dependent insertion of CO2 between the N7 and N8 nitrogen atoms of 7,8-diaminopelargonic acid (DAPA, also called 7,8-diammoniononanoate) to form a ureido ring. The chain is ATP-dependent dethiobiotin synthetase BioD from Rhodopseudomonas palustris (strain TIE-1).